Consider the following 391-residue polypeptide: MSGPVPSRARVYTDVNTHRPREYWDYESHVVEWGNQDDYQLVRKLGRGKYSEVFEAINITNNEKVVVKILKPVKKKKIKREIKILENLRGGPNIITLADIVKDPVSRTPALVFEHVNNTDFKQLYQTLTDYDIRFYMYEILKALDYCHSMGIMHRDVKPHNVMIDHEHRKLRLIDWGLAEFYHPGQEYNVRVASRYFKGPELLVDYQMYDYSLDMWSLGCMLASMIFRKEPFFHGHDNYDQLVRIAKVLGTEDLYDYIDKYNIELDPRFNDILGRHSRKRWERFVHSENQHLVSPEALDFLDKLLRYDHQSRLTAREAMEHPYFYTVVKDQARMGSSSMPGGSTPVSSANMMSGISSVPTPSPLGPLAGSPVIAAANPLGMPVPAAAGAQQ.

The interval 36-41 (QDDYQL) is interaction with beta subunit. The 286-residue stretch at 39–324 (YQLVRKLGRG…AREAMEHPYF (286 aa)) folds into the Protein kinase domain. ATP is bound by residues 45-53 (LGRGKYSEV) and Lys-68. Asp-156 (proton acceptor) is an active-site residue. 2 positions are modified to phosphothreonine; by CDK1: Thr-344 and Thr-360. A phosphoserine; by CDK1 mark is found at Ser-362 and Ser-370.

The protein belongs to the protein kinase superfamily. Ser/Thr protein kinase family. CK2 subfamily. Heterotetramer composed of two catalytic subunits (alpha chain and/or alpha' chain) and two regulatory subunits (beta chains). The tetramer can exist as a combination of 2 alpha/2 beta, 2 alpha'/2 beta or 1 alpha/1 alpha'/2 beta subunits. Also part of a CK2-SPT16-SSRP1 complex composed of SSRP1, SUPT16H, CSNK2A1, CSNK2A2 and CSNK2B, which forms following UV irradiation. Interacts with RNPS1. Interacts with SNAI1. Interacts with PML. Interacts with CCAR2. Interacts with HIRIP3. Post-translationally, phosphorylated at Thr-344, Thr-360, Ser-362 and Ser-370 by CDK1 in prophase and metaphase and dephosphorylated during anaphase. Phosphorylation does not directly affect casein kinase 2 activity, but may contribute to its regulation by forming binding sites for interacting proteins and/or targeting it to different compartments.

The protein localises to the nucleus. The enzyme catalyses L-seryl-[protein] + ATP = O-phospho-L-seryl-[protein] + ADP + H(+). It catalyses the reaction L-threonyl-[protein] + ATP = O-phospho-L-threonyl-[protein] + ADP + H(+). Constitutively active protein kinase whose activity is not directly affected by phosphorylation. Seems to be regulated by level of expression and localization. Catalytic subunit of a constitutively active serine/threonine-protein kinase complex that phosphorylates a large number of substrates containing acidic residues C-terminal to the phosphorylated serine or threonine. Regulates numerous cellular processes, such as cell cycle progression, apoptosis and transcription, as well as viral infection. May act as a regulatory node which integrates and coordinates numerous signals leading to an appropriate cellular response. During mitosis, functions as a component of the p53/TP53-dependent spindle assembly checkpoint (SAC) that maintains cyclin-B-CDK1 activity and G2 arrest in response to spindle damage. Also required for p53/TP53-mediated apoptosis, phosphorylating 'Ser-392' of p53/TP53 following UV irradiation. Phosphorylates a number of DNA repair proteins in response to DNA damage, such as MDC1, MRE11, RAD9A, RAD51 and HTATSF1, promoting their recruitment to DNA damage sites. Can also negatively regulate apoptosis. Phosphorylates the caspases CASP9 and CASP2 and the apoptotic regulator NOL3. Phosphorylation protects CASP9 from cleavage and activation by CASP8, and inhibits the dimerization of CASP2 and activation of CASP8. Phosphorylates YY1, protecting YY1 from cleavage by CASP7 during apoptosis. Regulates transcription by direct phosphorylation of RNA polymerases I, II, III and IV. Also phosphorylates and regulates numerous transcription factors including NF-kappa-B, STAT1, CREB1, IRF1, IRF2, ATF1, ATF4, SRF, MAX, JUN, FOS, MYC and MYB. Phosphorylates Hsp90 and its co-chaperones FKBP4 and CDC37, which is essential for chaperone function. Mediates sequential phosphorylation of FNIP1, promoting its gradual interaction with Hsp90, leading to activate both kinase and non-kinase client proteins of Hsp90. Regulates Wnt signaling by phosphorylating CTNNB1 and the transcription factor LEF1. Acts as an ectokinase that phosphorylates several extracellular proteins. Plays an important role in the circadian clock function by phosphorylating BMAL1 at 'Ser-90' which is pivotal for its interaction with CLOCK and which controls CLOCK nuclear entry. Phosphorylates FMR1, promoting FMR1-dependent formation of a membraneless compartment. May phosphorylate histone H2A on 'Ser-1'. The chain is Casein kinase II subunit alpha (CSNK2A1) from Bos taurus (Bovine).